A 362-amino-acid chain; its full sequence is MIIDRVEVETINSFSKLELLKEIYGLIWILPILALLLGITIEVLVIVWLEREISASIQQRIGPEYAGPLGLLQAIADGTKLLLKEDILPSRGEIPLFSIGPSIAVISILLSFLVIPLGYHFVLADLSIGVFLWIAISSIAPIGLLMAGYSSNNKYSFLGGLRAAAQSISYEIPLTFCVLAISLLSNSLSTVDIVEAQSKYGFFGWNLWRQPIGFLVFLISSLAECERLPFDLPEAEEELVAGYQTEYSGIKYGLFYLVSYLNLLVSSLFVTVLYLGGWNFSIPYISFFGFFQMNKIIGILEMVIGIFITLTKAYLFLFISITIRWTLPRMRMDQLLNLGWKFLLPISLGNLLLTTSFQLVSL.

The next 8 membrane-spanning stretches (helical) occupy residues 27-47 (IWIL…LVIV), 103-123 (IAVI…HFVL), 128-148 (IGVF…LMAG), 164-184 (AAQS…ISLL), 202-222 (FFGW…ISSL), 247-267 (YSGI…LVSS), 303-323 (VIGI…SITI), and 342-362 (FLLP…LVSL).

Belongs to the complex I subunit 1 family. In terms of assembly, NDH is composed of at least 16 different subunits, 5 of which are encoded in the nucleus.

Its subcellular location is the plastid. It is found in the chloroplast thylakoid membrane. The catalysed reaction is a plastoquinone + NADH + (n+1) H(+)(in) = a plastoquinol + NAD(+) + n H(+)(out). It catalyses the reaction a plastoquinone + NADPH + (n+1) H(+)(in) = a plastoquinol + NADP(+) + n H(+)(out). Functionally, NDH shuttles electrons from NAD(P)H:plastoquinone, via FMN and iron-sulfur (Fe-S) centers, to quinones in the photosynthetic chain and possibly in a chloroplast respiratory chain. The immediate electron acceptor for the enzyme in this species is believed to be plastoquinone. Couples the redox reaction to proton translocation, and thus conserves the redox energy in a proton gradient. The sequence is that of NAD(P)H-quinone oxidoreductase subunit 1, chloroplastic from Saccharum hybrid (Sugarcane).